The sequence spans 828 residues: Kinesin-associated protein 3 (828 aa).

ARM repeat units lie at residues 332–372 (YVEN…NLSF), 373–411 (DTDLRGKMIKLGMLPKFVELLANDNHRLVVLCVLYHVSQ), and 577–611 (DDSCAAMLAKSGIIQSLIELLNAKQEDDEIVCQIV).

Heterotrimer of a 115 kDa subunit (KAP115) and two kinesin-like subunits of 95 kDa (KRP95) and 85 kDa (KRP85).

Binds to the tail domain of the KRP85/KRP95 heterodimer to form a heterotrimeric kinesin-II complex and may regulate the spindle vesicle targeting of this complex. The sequence is that of Kinesin-associated protein 3 (KAP115) from Strongylocentrotus purpuratus (Purple sea urchin).